The sequence spans 626 residues: MAARPAATLAWSLLLLSSALLREGCRARFVAERDSEDDGEEPVVFPESPLQSPTVLVAVLARNAAHTLPHFLGCLERLDYPKSRMAIWAATDHNVDNTTEIFREWLKNVQRLYHYVEWRPMDEPESYPDEIGPKHWPTSRFAHVMKLRQAALRTAREKWSDYILFIDVDNFLTNPQTLNLLIAENKTIVAPMLESRGLYSNFWCGITPKGFYKRTPDYVQIREWKRTGCFPVPMVHSTFLIDLRKEASDKLTFYPPHQDYTWTFDDIIVFAFSSRQAGIQMYLCNREHYGYLPIPLKPHQTLQEDIENLIHVQIEAMIDRPPMEPSQYVSVVPKYPDKMGFDEIFMINLKRRKDRRDRMLRTLYEQEIEVKIVEAVDGKALNTSQLKALNIEMLPGYRDPYSSRPLTRGEIGCFLSHYSVWKEVIDRELEKTLVIEDDVRFEHQFKKKLMKLMDNIDQAQLDWELIYIGRKRMQVKEPEKAVPNVANLVEADYSYWTLGYVISLEGAQKLVGANPFGKMLPVDEFLPVMYNKHPVAEYKEYYESRDLKAFSAEPLLIYPTHYTGQPGYLSDTETSTIWDNETVATDWDRTHAWKSRKQSRIYSNAKNTEALPPPTSLDTVPSRDEL.

The N-terminal stretch at 1–27 (MAARPAATLAWSLLLLSSALLREGCRA) is a signal peptide. N-linked (GlcNAc...) asparagine glycans are attached at residues Asn-97, Asn-185, Asn-382, and Asn-580. Residues 604 to 626 (NAKNTEALPPPTSLDTVPSRDEL) are disordered. Residues 623–626 (RDEL) carry the Prevents secretion from ER motif.

Belongs to the glycosyltransferase 25 family. In terms of tissue distribution, expressed in brain and skeletal muscle.

The protein localises to the endoplasmic reticulum lumen. It catalyses the reaction (5R)-5-hydroxy-L-lysyl-[collagen] + UDP-alpha-D-galactose = (5R)-5-O-(beta-D-galactosyl)-5-hydroxy-L-lysyl-[collagen] + UDP + H(+). Its function is as follows. Beta-galactosyltransferase that transfers beta-galactose to hydroxylysine residues of collagen. The polypeptide is Procollagen galactosyltransferase 2 (COLGALT2) (Homo sapiens (Human)).